The chain runs to 515 residues: Protein nucleotidyltransferase YdiU (515 aa).

Residues glycine 101, glycine 103, arginine 104, lysine 124, aspartate 136, glycine 137, arginine 194, and arginine 201 each contribute to the ATP site. Aspartate 269 (proton acceptor) is an active-site residue. Mg(2+) contacts are provided by asparagine 270 and aspartate 279. Aspartate 279 serves as a coordination point for ATP.

Belongs to the SELO family. The cofactor is Mg(2+). It depends on Mn(2+) as a cofactor.

It carries out the reaction L-seryl-[protein] + ATP = 3-O-(5'-adenylyl)-L-seryl-[protein] + diphosphate. The catalysed reaction is L-threonyl-[protein] + ATP = 3-O-(5'-adenylyl)-L-threonyl-[protein] + diphosphate. The enzyme catalyses L-tyrosyl-[protein] + ATP = O-(5'-adenylyl)-L-tyrosyl-[protein] + diphosphate. It catalyses the reaction L-histidyl-[protein] + UTP = N(tele)-(5'-uridylyl)-L-histidyl-[protein] + diphosphate. It carries out the reaction L-seryl-[protein] + UTP = O-(5'-uridylyl)-L-seryl-[protein] + diphosphate. The catalysed reaction is L-tyrosyl-[protein] + UTP = O-(5'-uridylyl)-L-tyrosyl-[protein] + diphosphate. Functionally, nucleotidyltransferase involved in the post-translational modification of proteins. It can catalyze the addition of adenosine monophosphate (AMP) or uridine monophosphate (UMP) to a protein, resulting in modifications known as AMPylation and UMPylation. The chain is Protein nucleotidyltransferase YdiU from Cytophaga hutchinsonii (strain ATCC 33406 / DSM 1761 / CIP 103989 / NBRC 15051 / NCIMB 9469 / D465).